Reading from the N-terminus, the 329-residue chain is Flotillin-like protein FloA (329 aa).

2 helical membrane-spanning segments follow: residues 6–26 (FIVIAVIIVVALLILFSFVPI) and 27–47 (GLWISALAAGVHVGIGTLVGM).

This sequence belongs to the flotillin-like FloA family. Homooligomerizes.

It localises to the cell membrane. The protein localises to the membrane raft. Functionally, found in functional membrane microdomains (FMM) that may be equivalent to eukaryotic membrane rafts. FMMs are highly dynamic and increase in number as cells age. Flotillins are thought to be important factors in membrane fluidity. The protein is Flotillin-like protein FloA of Staphylococcus aureus (strain USA300).